Reading from the N-terminus, the 540-residue chain is Pentatricopeptide repeat-containing protein At1g14470 (540 aa).

PPR repeat units lie at residues 70–104 (NVFVVNSMFKYFSKMDMANDVLRLYEQRSRCGIMP), 105–134 (DAFSFPVVIKSAGRFGILFQALVEKLGFFK), 135–165 (DPYVRNVIMDMYVKHESVESARKVFDQISQR), 166–196 (KGSDWNVMISGYWKWGNKEEACKLFDMMPEN), 197–227 (DVVSWTVMITGFAKVKDLENARKYFDRMPEK), 228–262 (SVVSWNAMLSGYAQNGFTEDALRLFNDMLRLGVRP), 263–297 (NETTWVIVISACSFRADPSLTRSLVKLIDEKRVRL), 298–328 (NCFVKTALLDMHAKCRDIQSARRIFNELGTQ), 330–364 (NLVTWNAMISGYTRIGDMSSARQLFDTMPKRNVVS), 365–395 (WNSLIAGYAHNGQAALAIEFFEDMIDYGDSK), 397–431 (DEVTMISVLSACGHMADLELGDCIVDYIRKNQIKL), 432–462 (NDSGYRSLIFMYARGGNLWEAKRVFDEMKER), 463–497 (DVVSYNTLFTAFAANGDGVETLNLLSKMKDEGIEP), and 498–528 (DRVTYTSVLTACNRAGLLKEGQRIFKSIRNP).

This sequence belongs to the PPR family. PCMP-A subfamily.

This chain is Pentatricopeptide repeat-containing protein At1g14470 (PCMP-A4), found in Arabidopsis thaliana (Mouse-ear cress).